The chain runs to 349 residues: Ornithine carbamoyltransferase, mitochondrial (349 aa).

Carbamoyl phosphate contacts are provided by residues 73-76 (STRT), arginine 124, histidine 151, and glutamine 154. Residues asparagine 195, aspartate 261, serine 265, and methionine 266 each contribute to the L-ornithine site. The active-site Proton acceptor is the cysteine 303. Carbamoyl phosphate contacts are provided by residues 303 to 304 (CL) and arginine 330.

This sequence belongs to the aspartate/ornithine carbamoyltransferase superfamily. OTCase family. Homotrimer.

The protein resides in the mitochondrion matrix. The enzyme catalyses carbamoyl phosphate + L-ornithine = L-citrulline + phosphate + H(+). Its pathway is amino-acid biosynthesis; L-arginine biosynthesis; L-arginine from L-ornithine and carbamoyl phosphate: step 1/3. The protein is Ornithine carbamoyltransferase, mitochondrial of Coccidioides immitis (strain RS) (Valley fever fungus).